The primary structure comprises 173 residues: 3-hydroxydecanoyl-[acyl-carrier-protein] dehydratase (173 aa).

His-71 is an active-site residue.

This sequence belongs to the thioester dehydratase family. FabA subfamily. As to quaternary structure, homodimer.

It is found in the cytoplasm. The catalysed reaction is a (3R)-hydroxyacyl-[ACP] = a (2E)-enoyl-[ACP] + H2O. It catalyses the reaction (3R)-hydroxydecanoyl-[ACP] = (2E)-decenoyl-[ACP] + H2O. It carries out the reaction (2E)-decenoyl-[ACP] = (3Z)-decenoyl-[ACP]. Its pathway is lipid metabolism; fatty acid biosynthesis. Its function is as follows. Necessary for the introduction of cis unsaturation into fatty acids. Catalyzes the dehydration of (3R)-3-hydroxydecanoyl-ACP to E-(2)-decenoyl-ACP and then its isomerization to Z-(3)-decenoyl-ACP. Can catalyze the dehydratase reaction for beta-hydroxyacyl-ACPs with saturated chain lengths up to 16:0, being most active on intermediate chain length. The polypeptide is 3-hydroxydecanoyl-[acyl-carrier-protein] dehydratase (Bradyrhizobium diazoefficiens (strain JCM 10833 / BCRC 13528 / IAM 13628 / NBRC 14792 / USDA 110)).